The sequence spans 499 residues: Probable cytosol aminopeptidase (499 aa).

Residues K271 and D276 each contribute to the Mn(2+) site. K283 is a catalytic residue. Positions 294, 353, and 355 each coordinate Mn(2+). R357 is an active-site residue.

This sequence belongs to the peptidase M17 family. Requires Mn(2+) as cofactor.

The protein localises to the cytoplasm. The catalysed reaction is Release of an N-terminal amino acid, Xaa-|-Yaa-, in which Xaa is preferably Leu, but may be other amino acids including Pro although not Arg or Lys, and Yaa may be Pro. Amino acid amides and methyl esters are also readily hydrolyzed, but rates on arylamides are exceedingly low.. It carries out the reaction Release of an N-terminal amino acid, preferentially leucine, but not glutamic or aspartic acids.. Presumably involved in the processing and regular turnover of intracellular proteins. Catalyzes the removal of unsubstituted N-terminal amino acids from various peptides. The sequence is that of Probable cytosol aminopeptidase from Bordetella bronchiseptica (strain ATCC BAA-588 / NCTC 13252 / RB50) (Alcaligenes bronchisepticus).